A 244-amino-acid chain; its full sequence is 1-(5-phosphoribosyl)-5-[(5-phosphoribosylamino)methylideneamino] imidazole-4-carboxamide isomerase (244 aa).

D8 acts as the Proton acceptor in catalysis. D130 (proton donor) is an active-site residue.

This sequence belongs to the HisA/HisF family.

The protein resides in the cytoplasm. It catalyses the reaction 1-(5-phospho-beta-D-ribosyl)-5-[(5-phospho-beta-D-ribosylamino)methylideneamino]imidazole-4-carboxamide = 5-[(5-phospho-1-deoxy-D-ribulos-1-ylimino)methylamino]-1-(5-phospho-beta-D-ribosyl)imidazole-4-carboxamide. It participates in amino-acid biosynthesis; L-histidine biosynthesis; L-histidine from 5-phospho-alpha-D-ribose 1-diphosphate: step 4/9. In Hahella chejuensis (strain KCTC 2396), this protein is 1-(5-phosphoribosyl)-5-[(5-phosphoribosylamino)methylideneamino] imidazole-4-carboxamide isomerase.